We begin with the raw amino-acid sequence, 395 residues long: Elongation factor Tu (395 aa).

The tr-type G domain occupies 6 to 205; that stretch reads KPHINVGTIG…NALEKISLPT (200 aa). Residues 15-22 form a G1 region; that stretch reads GHVDHGKT. GTP is bound at residue 15–22; sequence GHVDHGKT. T22 is a binding site for Mg(2+). Residues 59–63 are G2; that stretch reads GITIS. The segment at 80 to 83 is G3; it reads DCPG. Residues 80–84 and 135–138 contribute to the GTP site; these read DCPGH and NKCD. Positions 135–138 are G4; sequence NKCD. The interval 173 to 175 is G5; the sequence is SAV.

This sequence belongs to the TRAFAC class translation factor GTPase superfamily. Classic translation factor GTPase family. EF-Tu/EF-1A subfamily. Monomer.

It localises to the cytoplasm. The catalysed reaction is GTP + H2O = GDP + phosphate + H(+). Its function is as follows. GTP hydrolase that promotes the GTP-dependent binding of aminoacyl-tRNA to the A-site of ribosomes during protein biosynthesis. This Ehrlichia chaffeensis (strain ATCC CRL-10679 / Arkansas) protein is Elongation factor Tu.